The primary structure comprises 451 residues: Tubulin beta chain (451 aa).

Positions 11, 69, 138, 142, 143, 144, 204, and 226 each coordinate GTP. Glu69 provides a ligand contact to Mg(2+). Positions 426 to 451 (QDATAEEEGEFDENEGAEGEEQPADY) are disordered. Residues 429–451 (TAEEEGEFDENEGAEGEEQPADY) are compositionally biased toward acidic residues.

This sequence belongs to the tubulin family. In terms of assembly, dimer of alpha and beta chains. A typical microtubule is a hollow water-filled tube with an outer diameter of 25 nm and an inner diameter of 15 nM. Alpha-beta heterodimers associate head-to-tail to form protofilaments running lengthwise along the microtubule wall with the beta-tubulin subunit facing the microtubule plus end conferring a structural polarity. Microtubules usually have 13 protofilaments but different protofilament numbers can be found in some organisms and specialized cells. The cofactor is Mg(2+).

It is found in the cytoplasm. The protein resides in the cytoskeleton. Functionally, tubulin is the major constituent of microtubules, a cylinder consisting of laterally associated linear protofilaments composed of alpha- and beta-tubulin heterodimers. Microtubules grow by the addition of GTP-tubulin dimers to the microtubule end, where a stabilizing cap forms. Below the cap, tubulin dimers are in GDP-bound state, owing to GTPase activity of alpha-tubulin. The sequence is that of Tubulin beta chain from Naegleria pringsheimi (Amoeba).